Consider the following 564-residue polypeptide: Arginine--tRNA ligase (564 aa).

Residues 122–132 carry the 'HIGH' region motif; the sequence is PNIAKPFSIGH.

It belongs to the class-I aminoacyl-tRNA synthetase family. Monomer.

The protein resides in the cytoplasm. It carries out the reaction tRNA(Arg) + L-arginine + ATP = L-arginyl-tRNA(Arg) + AMP + diphosphate. In Lactococcus lactis subsp. lactis (strain IL1403) (Streptococcus lactis), this protein is Arginine--tRNA ligase.